Reading from the N-terminus, the 414-residue chain is 5-aminolevulinate synthase (414 aa).

Arg-22, Ser-133, and Lys-152 together coordinate substrate. Residues Ser-185, His-213, and Thr-241 each contribute to the pyridoxal 5'-phosphate site. Lys-244 is an active-site residue. Lys-244 is modified (N6-(pyridoxal phosphate)lysine). The pyridoxal 5'-phosphate site is built by Thr-273 and Thr-274. Thr-359 is a substrate binding site.

This sequence belongs to the class-II pyridoxal-phosphate-dependent aminotransferase family. As to quaternary structure, homodimer. Pyridoxal 5'-phosphate serves as cofactor.

It carries out the reaction succinyl-CoA + glycine + H(+) = 5-aminolevulinate + CO2 + CoA. It participates in porphyrin-containing compound metabolism; protoporphyrin-IX biosynthesis; 5-aminolevulinate from glycine: step 1/1. The chain is 5-aminolevulinate synthase (hemA) from Rickettsia felis (strain ATCC VR-1525 / URRWXCal2) (Rickettsia azadi).